A 296-amino-acid polypeptide reads, in one-letter code: 4-hydroxy-tetrahydrodipicolinate synthase (296 aa).

Thr49 serves as a coordination point for pyruvate. The active-site Proton donor/acceptor is the Tyr137. The active-site Schiff-base intermediate with substrate is Lys166. Residue Val208 coordinates pyruvate.

Belongs to the DapA family. As to quaternary structure, homotetramer; dimer of dimers.

Its subcellular location is the cytoplasm. It catalyses the reaction L-aspartate 4-semialdehyde + pyruvate = (2S,4S)-4-hydroxy-2,3,4,5-tetrahydrodipicolinate + H2O + H(+). It functions in the pathway amino-acid biosynthesis; L-lysine biosynthesis via DAP pathway; (S)-tetrahydrodipicolinate from L-aspartate: step 3/4. Its function is as follows. Catalyzes the condensation of (S)-aspartate-beta-semialdehyde [(S)-ASA] and pyruvate to 4-hydroxy-tetrahydrodipicolinate (HTPA). The protein is 4-hydroxy-tetrahydrodipicolinate synthase of Desulforamulus reducens (strain ATCC BAA-1160 / DSM 100696 / MI-1) (Desulfotomaculum reducens).